The sequence spans 241 residues: Tetraspanin-1 (241 aa).

At 1–11 (MQCFSFIKTMM) the chain is on the cytoplasmic side. A helical transmembrane segment spans residues 12–34 (ILFNLLIFLCGAALLAVGIWVSI). Residues 35-53 (DGASFLKIFGPLSSSAMQF) lie on the Extracellular side of the membrane. The helical transmembrane segment at 54 to 76 (VNVGYFLIAAGVVVFALGFLGCY) threads the bilayer. Topologically, residues 77–88 (GAKTESKCALMT) are cytoplasmic. A helical membrane pass occupies residues 89 to 111 (FFFILLLIFIAEVAAAVVALVYT). The Extracellular segment spans residues 112–214 (TMAEHFLTLL…LYDIRTNAVT (103 aa)). Asn141, Asn154, Asn178, and Asn184 each carry an N-linked (GlcNAc...) asparagine glycan. Residues 215–237 (VGGVAAGIGGLELAAMIVSMYLY) form a helical membrane-spanning segment. The Cytoplasmic segment spans residues 238–241 (CNLQ).

This sequence belongs to the tetraspanin (TM4SF) family. As to quaternary structure, interacts with SLC19A2. Interacts with NTRK1/TRKA.

It localises to the lysosome membrane. Its function is as follows. Structural component of specialized membrane microdomains known as tetraspanin-enriched microdomains (TERMs), which act as platforms for receptor clustering and signaling. Participates thereby in diverse biological functions such as cell signal transduction, adhesion, migration and protein trafficking. Regulates neuronal differentiation in response to NGF by facilitating NGF-mediated activation of NTRK1/TRKA receptor tyrosine kinase and subsequent downstream signaling pathways. Plays a role in the inhibition of TNFalpha-induced apoptosis. Mechanistically, inhibits the NF-kappa-B signaling pathway by blocking phosphorylation of CHUK. Also promotes the stability of the thiamine transporter 1/SLC19A2 in intestinal epithelial cells leading to an increase of thiamine uptake process. This is Tetraspanin-1 (TSPAN1) from Pongo abelii (Sumatran orangutan).